We begin with the raw amino-acid sequence, 541 residues long: Membrane protein insertase YidC (541 aa).

The next 5 helical transmembrane spans lie at 6–26, 349–369, 420–440, 457–477, and 500–520; these read NILL…WQAD, FVGN…GLLF, GGCL…WVLL, LSVQ…MFVM, and VIFT…WLVG.

The protein belongs to the OXA1/ALB3/YidC family. Type 1 subfamily. In terms of assembly, interacts with the Sec translocase complex via SecD. Specifically interacts with transmembrane segments of nascent integral membrane proteins during membrane integration.

It localises to the cell inner membrane. Required for the insertion and/or proper folding and/or complex formation of integral membrane proteins into the membrane. Involved in integration of membrane proteins that insert both dependently and independently of the Sec translocase complex, as well as at least some lipoproteins. Aids folding of multispanning membrane proteins. The sequence is that of Membrane protein insertase YidC from Shewanella sp. (strain MR-7).